The sequence spans 412 residues: Poly-beta-1,6-N-acetyl-D-glucosamine synthase (412 aa).

Helical transmembrane passes span 7–28, 298–320, 332–354, and 364–386; these read LLFY…YFFI, IASI…TANI, IFFF…ALFI, and VGLI…VVIM.

This sequence belongs to the glycosyltransferase 2 family.

It is found in the cell membrane. In terms of biological role, N-acetylglucosaminyltransferase that catalyzes the polymerization of single monomer units of UDP-N-acetylglucosamine to produce the linear homomer poly-beta-1,6-N-acetyl-D-glucosamine (PNAG, also referred to as PIA), a biofilm adhesin polysaccharide. Requires IcaD for full activity. The polypeptide is Poly-beta-1,6-N-acetyl-D-glucosamine synthase (icaA) (Staphylococcus epidermidis).